We begin with the raw amino-acid sequence, 242 residues long: ATP synthase subunit a (242 aa).

6 helical membrane-spanning segments follow: residues 29–49 (SSIYMLLASILALTYFYLAFY), 84–104 (FIPLVFSLFIFVLFSNLLGMT), 114–134 (IIVTFTLAIIVFLTVTIVGFV), 140–160 (FLTLFLPYGTPLWLAPLMIVI), 181–201 (MAGHVLLKVIAGFTVSLMIYL), and 203–223 (FLPIPIIVILIGFEIFVAILQ).

Belongs to the ATPase A chain family. F-type ATPases have 2 components, CF(1) - the catalytic core - and CF(0) - the membrane proton channel. CF(1) has five subunits: alpha(3), beta(3), gamma(1), delta(1), epsilon(1). CF(0) has three main subunits: a(1), b(2) and c(9-12). The alpha and beta chains form an alternating ring which encloses part of the gamma chain. CF(1) is attached to CF(0) by a central stalk formed by the gamma and epsilon chains, while a peripheral stalk is formed by the delta and b chains.

It is found in the cell inner membrane. Functionally, key component of the proton channel; it plays a direct role in the translocation of protons across the membrane. The polypeptide is ATP synthase subunit a (Rickettsia akari (strain Hartford)).